The sequence spans 335 residues: Methionine aminopeptidase 1D, mitochondrial (335 aa).

The transit peptide at 1–19 (MAAPIGVPLLVRGGCQRIL) directs the protein to the mitochondrion. His161 contributes to the substrate binding site. A divalent metal cation-binding residues include Asp178, Asp189, and His252. His259 lines the substrate pocket. 2 residues coordinate a divalent metal cation: Glu284 and Glu315.

The protein belongs to the peptidase M24A family. Methionine aminopeptidase type 1 subfamily. It depends on Co(2+) as a cofactor. Zn(2+) serves as cofactor. Requires Mn(2+) as cofactor. Fe(2+) is required as a cofactor.

The protein localises to the mitochondrion. It catalyses the reaction Release of N-terminal amino acids, preferentially methionine, from peptides and arylamides.. Its function is as follows. Removes the N-terminal methionine from nascent proteins. The N-terminal methionine is often cleaved when the second residue in the primary sequence is small and uncharged (Met-Ala-, Cys, Gly, Pro, Ser, Thr, or Val). Requires deformylation of the N(alpha)-formylated initiator methionine before it can be hydrolyzed. This chain is Methionine aminopeptidase 1D, mitochondrial (Metap1d), found in Mus musculus (Mouse).